The chain runs to 794 residues: Copper-exporting P-type ATPase (794 aa).

HMA domains are found at residues 4–69 (TTLT…YDVA) and 71–137 (EQVE…YDAE). C15, C18, C82, and C85 together coordinate Cu(+). The next 6 membrane-spanning stretches (helical) occupy residues 161-181 (IISAILSLPLLLVMVVHISPI), 186-206 (ILVNPWVQLILSTPVQFIIGW), 225-245 (VLVAVGTSAAYFYSIYEMMMW), 255-275 (LYFETSAILITLILLGKYLEA), 410-430 (YFVPIVVSIAVITFIIWIIFV), and 437-457 (PALVSAISVLVIACPCALGLA). Catalysis depends on D494, which acts as the 4-aspartylphosphate intermediate. Mg(2+)-binding residues include D689 and D693. Transmembrane regions (helical) follow at residues 747–767 (LFWAFGYNVAGIPIAACGLLA) and 773–789 (AAMALSSVSVVMNALRL).

Belongs to the cation transport ATPase (P-type) (TC 3.A.3) family. Type IB subfamily.

It localises to the cell membrane. The catalysed reaction is Cu(+)(in) + ATP + H2O = Cu(+)(out) + ADP + phosphate + H(+). In terms of biological role, involved in copper export. The polypeptide is Copper-exporting P-type ATPase (copA) (Staphylococcus epidermidis (strain ATCC 35984 / DSM 28319 / BCRC 17069 / CCUG 31568 / BM 3577 / RP62A)).